Here is a 41-residue protein sequence, read N- to C-terminus: MKDFTTYLSTAPVLTLVSLTAVAGLLIEINRFFPDALTAAF.

The chain crosses the membrane as a helical span at residues 7 to 27; sequence YLSTAPVLTLVSLTAVAGLLI.

Belongs to the PsaJ family.

The protein resides in the plastid. It is found in the chloroplast thylakoid membrane. Functionally, may help in the organization of the PsaE and PsaF subunits. In Chlorella vulgaris (Green alga), this protein is Photosystem I reaction center subunit IX.